Consider the following 68-residue polypeptide: Antimicrobial peptide UyCT5 (68 aa).

Positions M1–A23 are cleaved as a signal peptide. At L36 the chain carries Leucine amide. The propeptide occupies G40–R68.

Belongs to the non-disulfide-bridged peptide (NDBP) superfamily. Short antimicrobial peptide (group 4) family. In terms of tissue distribution, expressed by the venom gland.

The protein localises to the secreted. Its subcellular location is the target cell membrane. In terms of biological role, antimicrobial peptide that inhibits the growth of Gram-positive (S.aureus, MIC=1 uM) and Gram-negative bacteria (E.coli, MIC=15 uM and P.aeruginosa, MIC=2 uM). It also shows 37% of hemolysis when 15 uM are tested (93% at 50 uM). The polypeptide is Antimicrobial peptide UyCT5 (Urodacus yaschenkoi (Inland robust scorpion)).